We begin with the raw amino-acid sequence, 211 residues long: ATP-dependent Clp protease proteolytic subunit (211 aa).

Ser114 serves as the catalytic Nucleophile. Residue His139 is part of the active site.

This sequence belongs to the peptidase S14 family. As to quaternary structure, fourteen ClpP subunits assemble into 2 heptameric rings which stack back to back to give a disk-like structure with a central cavity, resembling the structure of eukaryotic proteasomes.

The protein localises to the cytoplasm. It catalyses the reaction Hydrolysis of proteins to small peptides in the presence of ATP and magnesium. alpha-casein is the usual test substrate. In the absence of ATP, only oligopeptides shorter than five residues are hydrolyzed (such as succinyl-Leu-Tyr-|-NHMec, and Leu-Tyr-Leu-|-Tyr-Trp, in which cleavage of the -Tyr-|-Leu- and -Tyr-|-Trp bonds also occurs).. In terms of biological role, cleaves peptides in various proteins in a process that requires ATP hydrolysis. Has a chymotrypsin-like activity. Plays a major role in the degradation of misfolded proteins. The sequence is that of ATP-dependent Clp protease proteolytic subunit from Pseudomonas fluorescens (strain Pf0-1).